The chain runs to 84 residues: Cell division topological specificity factor (84 aa).

The protein belongs to the MinE family.

Its function is as follows. Prevents the cell division inhibition by proteins MinC and MinD at internal division sites while permitting inhibition at polar sites. This ensures cell division at the proper site by restricting the formation of a division septum at the midpoint of the long axis of the cell. This is Cell division topological specificity factor from Hydrogenovibrio crunogenus (strain DSM 25203 / XCL-2) (Thiomicrospira crunogena).